A 369-amino-acid polypeptide reads, in one-letter code: Beta-1,3-galactosyltransferase 9 (369 aa).

Residues 1-12 lie on the Cytoplasmic side of the membrane; that stretch reads MQVTFCRLRTHQ. The helical; Signal-anchor for type II membrane protein transmembrane segment at 13–33 threads the bilayer; that stretch reads WCFILFNVILFHALLFGTDFV. The Lumenal portion of the chain corresponds to 34–369; that stretch reads EEYFLHSLPY…IKNNLMYFAD (336 aa). N-linked (GlcNAc...) asparagine glycans are attached at residues Asn-66, Asn-96, and Asn-109.

This sequence belongs to the glycosyltransferase 31 family.

Its subcellular location is the golgi apparatus membrane. In terms of biological role, putative glycosyltransferase that could catalyze the transfer of galactose residues from UDP-alpha-D-galactose. This Homo sapiens (Human) protein is Beta-1,3-galactosyltransferase 9.